The sequence spans 462 residues: Gastric inhibitory polypeptide receptor (462 aa).

An N-terminal signal peptide occupies residues 1-18; the sequence is MPLRPRLLLLCLWGLLLQ. The Extracellular portion of the chain corresponds to 19–135; that stretch reads QAETDSEGQT…DQRLILERLQ (117 aa). 3 cysteine pairs are disulfide-bonded: cysteine 43/cysteine 67, cysteine 58/cysteine 100, and cysteine 81/cysteine 115. N-linked (GlcNAc...) asparagine glycans are attached at residues asparagine 59 and asparagine 74. Residues 136–158 form a helical membrane-spanning segment; that stretch reads VVYTVGYSLSLGTLLLALLILSL. Over 159–166 the chain is Cytoplasmic; the sequence is FRRLHCTR. Residues 167–186 traverse the membrane as a helical segment; sequence NYIHMNVFLSFMLRAVAILT. Over 187–214 the chain is Extracellular; that stretch reads RDRLLPTLGPYPGDRTLTLRNQALAACR. A helical membrane pass occupies residues 215-239; sequence TAQIVTQYCVGANYTWLLVEGVYLH. Residues 240-251 lie on the Cytoplasmic side of the membrane; sequence HLLVIVGGSEKG. A helical membrane pass occupies residues 252–275; sequence HFRCYLLLGWGAPALFVIPWVIVR. At 276–290 the chain is on the extracellular side; it reads YLLENTQCWERNEVK. The helical transmembrane segment at 291-316 threads the bilayer; that stretch reads AIWWIIRTPILITILINFFIFIRILG. Over 317 to 338 the chain is Cytoplasmic; sequence ILVSKLRTRQMRCPDYRLRLAR. The chain crosses the membrane as a helical span at residues 339-359; that stretch reads STLTLVPLLGVHEVVFAPVTE. At 360 to 374 the chain is on the extracellular side; that stretch reads EQAEGTLRFAKLAFE. The chain crosses the membrane as a helical span at residues 375–395; it reads IFLSSFQGFLVSVLYCFINKE. The Cytoplasmic segment spans residues 396-462; that stretch reads VQSEIRRSWR…PGEEVLESYC (67 aa). Residues 421 to 462 form a disordered region; sequence HAELGPQALPSRSAPREVPITGSTLPSGPLHGPGEEVLESYC.

The protein belongs to the G-protein coupled receptor 2 family. May form homodimers and heterodimers with GLP1R. Post-translationally, N-glycosylation is required for cell surface expression and lengthens receptor half-life by preventing degradation in the ER. In terms of tissue distribution, widely distributed including pancreatic islets, brain and various peripheral tissues.

It is found in the cell membrane. This is a receptor for GIP. The activity of this receptor is mediated by G proteins which activate adenylyl cyclase. This is Gastric inhibitory polypeptide receptor (GIPR) from Mesocricetus auratus (Golden hamster).